The sequence spans 314 residues: Protein phosphatase PTC7 homolog fig (314 aa).

The 267-residue stretch at 43–309 folds into the PPM-type phosphatase domain; sequence PYLVTVVQGR…DDITLILSSV (267 aa). 3 residues coordinate Mn(2+): aspartate 87, glycine 88, and aspartate 232.

This sequence belongs to the PP2C family. Mg(2+) is required as a cofactor. Mn(2+) serves as cofactor.

The enzyme catalyses O-phospho-L-seryl-[protein] + H2O = L-seryl-[protein] + phosphate. The catalysed reaction is O-phospho-L-threonyl-[protein] + H2O = L-threonyl-[protein] + phosphate. This chain is Protein phosphatase PTC7 homolog fig, found in Drosophila melanogaster (Fruit fly).